We begin with the raw amino-acid sequence, 143 residues long: Large ribosomal subunit protein bL28c (143 aa).

The transit peptide at 1-66 (MTTMATQGAW…SFPGIQPIVA (66 aa)) directs the protein to the chloroplast.

It belongs to the bacterial ribosomal protein bL28 family. As to quaternary structure, part of the 50S ribosomal subunit.

Its subcellular location is the plastid. It is found in the chloroplast. In Arabidopsis thaliana (Mouse-ear cress), this protein is Large ribosomal subunit protein bL28c (RPL28).